We begin with the raw amino-acid sequence, 238 residues long: uncharacterized protein (238 aa).

The next 5 membrane-spanning stretches (helical) occupy residues 6-26 (METLIRLFVSILIICVLALMI), 45-65 (FILLYFCGFKYLILLLSFFIL), 98-118 (IPILFAILAIFGFNWALIGYI), 160-180 (IFGTLAGVLGAFLIGLFGYLL), and 186-206 (IVLCGTAGGIAGNLADSLVGA).

The protein belongs to the TMEM19 family.

Its subcellular location is the cell membrane. This is an uncharacterized protein from Methanocaldococcus jannaschii (strain ATCC 43067 / DSM 2661 / JAL-1 / JCM 10045 / NBRC 100440) (Methanococcus jannaschii).